Here is a 695-residue protein sequence, read N- to C-terminus: Probable glutamine--tRNA ligase (695 aa).

The 'HIGH' region signature appears at 201-211 (PEPNGILHIGH). ATP is bound by residues 202-204 (EPN) and 208-214 (HIGHAKA). L-glutamine is bound by residues Asp-234 and Tyr-391. Residues Thr-410, 439-440 (RL), and 447-449 (LSK) contribute to the ATP site. A 'KMSKS' region motif is present at residues 446–450 (VLSKR).

Belongs to the class-I aminoacyl-tRNA synthetase family.

It catalyses the reaction tRNA(Gln) + L-glutamine + ATP = L-glutaminyl-tRNA(Gln) + AMP + diphosphate. The chain is Probable glutamine--tRNA ligase from Vairimorpha ceranae (strain BRL01) (Microsporidian parasite).